A 247-amino-acid chain; its full sequence is Chymase (247 aa).

The first 19 residues, 1 to 19 (MLLLPLPLLLFFLCSRAEA), serve as a signal peptide directing secretion. Positions 20–21 (GE) are cleaved as a propeptide — activation peptide. A Peptidase S1 domain is found at 22-245 (IIGGTECKPH…YRPWINKILQ (224 aa)). Cys-51 and Cys-67 form a disulfide bridge. Residue His-66 is the Charge relay system of the active site. Residues Asn-80 and Asn-103 are each glycosylated (N-linked (GlcNAc...) asparagine). The active-site Charge relay system is Asp-110. 2 disulfide bridges follow: Cys-144/Cys-209 and Cys-175/Cys-188. Ser-203 serves as the catalytic Charge relay system.

This sequence belongs to the peptidase S1 family. Granzyme subfamily.

It is found in the secreted. The protein localises to the cytoplasmic granule. The enzyme catalyses Preferential cleavage: Phe-|-Xaa &gt; Tyr-|-Xaa &gt; Trp-|-Xaa &gt; Leu-|-Xaa.. Major secreted protease of mast cells with suspected roles in vasoactive peptide generation, extracellular matrix degradation, and regulation of gland secretion. The polypeptide is Chymase (CMA1) (Macaca fascicularis (Crab-eating macaque)).